The sequence spans 136 residues: Small ribosomal subunit protein uS8c (136 aa).

The protein belongs to the universal ribosomal protein uS8 family. Part of the 30S ribosomal subunit.

It is found in the plastid. The protein localises to the chloroplast. One of the primary rRNA binding proteins, it binds directly to 16S rRNA central domain where it helps coordinate assembly of the platform of the 30S subunit. This is Small ribosomal subunit protein uS8c (rps8) from Agrostis stolonifera (Creeping bentgrass).